Consider the following 943-residue polypeptide: Isoleucine--tRNA ligase (943 aa).

The short motif at 58–68 (PYANGSIHIGH) is the 'HIGH' region element. An L-isoleucyl-5'-AMP-binding site is contributed by Glu-567. The 'KMSKS' region motif lies at 608–612 (KMSKS). Lys-611 contributes to the ATP binding site. Zn(2+) contacts are provided by Cys-906, Cys-909, Cys-926, and Cys-929.

Belongs to the class-I aminoacyl-tRNA synthetase family. IleS type 1 subfamily. As to quaternary structure, monomer. Zn(2+) serves as cofactor.

The protein localises to the cytoplasm. It catalyses the reaction tRNA(Ile) + L-isoleucine + ATP = L-isoleucyl-tRNA(Ile) + AMP + diphosphate. Functionally, catalyzes the attachment of isoleucine to tRNA(Ile). As IleRS can inadvertently accommodate and process structurally similar amino acids such as valine, to avoid such errors it has two additional distinct tRNA(Ile)-dependent editing activities. One activity is designated as 'pretransfer' editing and involves the hydrolysis of activated Val-AMP. The other activity is designated 'posttransfer' editing and involves deacylation of mischarged Val-tRNA(Ile). The chain is Isoleucine--tRNA ligase from Pseudomonas aeruginosa (strain ATCC 15692 / DSM 22644 / CIP 104116 / JCM 14847 / LMG 12228 / 1C / PRS 101 / PAO1).